A 501-amino-acid chain; its full sequence is DEAD-box ATP-dependent RNA helicase 20 (501 aa).

Basic and acidic residues-rich tracts occupy residues 1–20 and 38–53; these read MSRY…RRSD and SKKD…KLDL. The tract at residues 1 to 53 is disordered; it reads MSRYDSRTGDSTSYRDRRSDSGFGGTSSYGSSGSHTSSKKDNDGNESPRKLDL. The short motif at 99-127 is the Q motif element; it reads KSFRDVGFPDYVLEEVKKAGFTEPTPIQS. The region spanning 130–305 is the Helicase ATP-binding domain; sequence WPMAMKGRDL…KKFLYNPYKV (176 aa). An ATP-binding site is contributed by 143–150; that stretch reads AETGSGKT. The DEAD box signature appears at 253 to 256; sequence DEAD. The 146-residue stretch at 333 to 478 folds into the Helicase C-terminal domain; sequence KLVKLLEDIM…KVSPELASMG (146 aa). Residues 473–501 are disordered; that stretch reads ELASMGRSTAPPPPGLGGFRDRGSRRGWS. Positions 491–501 are enriched in basic and acidic residues; that stretch reads FRDRGSRRGWS.

Belongs to the DEAD box helicase family. DDX5/DBP2 subfamily.

It is found in the nucleus. It catalyses the reaction ATP + H2O = ADP + phosphate + H(+). ATP-dependent RNA helicase involved nonsense-mediated mRNA decay and ribosome biogenesis through rRNA processing. This chain is DEAD-box ATP-dependent RNA helicase 20 (RH20), found in Arabidopsis thaliana (Mouse-ear cress).